A 372-amino-acid chain; its full sequence is N-acetylneuraminate epimerase 1 (372 aa).

Residues 1–25 (MITMKVKNFIYLPFCLFIGTSVAGA) form the signal peptide. Kelch repeat units lie at residues 44 to 88 (KIYI…TIID), 90 to 141 (KIYV…FIHN), 143 to 177 (HAVSTGGVNENIFNGYFSDVELSKGNSALTEKVNR), 178 to 223 (DYFS…IFAE), 226 to 269 (IYIL…VSGA), 291 to 340 (EKYS…PWQG), and 342 to 371 (MLILGGEKKDGKAVSDVIYLKKNDKQIKIV). Glu232 serves as the catalytic Proton acceptor.

Belongs to the NanM family. As to quaternary structure, homodimer.

The protein localises to the periplasm. The enzyme catalyses N-acetyl-alpha-neuraminate = N-acetyl-beta-neuraminate. In terms of biological role, converts alpha-N-acetylneuranimic acid (Neu5Ac) to the beta-anomer, accelerating the equilibrium between the alpha- and beta-anomers. Probably facilitates sialidase-negative bacteria to compete successfully for limited amounts of extracellular Neu5Ac, which is likely taken up in the beta-anomer. In addition, the rapid removal of sialic acid from solution might be advantageous to the bacterium to damp down host responses. This chain is N-acetylneuraminate epimerase 1, found in Escherichia coli O6:H1 (strain CFT073 / ATCC 700928 / UPEC).